The chain runs to 154 residues: Aspartate carbamoyltransferase regulatory chain (154 aa).

4 residues coordinate Zn(2+): C111, C116, C139, and C142.

Belongs to the PyrI family. In terms of assembly, contains catalytic and regulatory chains. Zn(2+) is required as a cofactor.

In terms of biological role, involved in allosteric regulation of aspartate carbamoyltransferase. The sequence is that of Aspartate carbamoyltransferase regulatory chain from Parabacteroides distasonis (strain ATCC 8503 / DSM 20701 / CIP 104284 / JCM 5825 / NCTC 11152).